Reading from the N-terminus, the 310-residue chain is Olfactory receptor 5W2 (310 aa).

Over M1–V25 the chain is Extracellular. A glycan (N-linked (GlcNAc...) asparagine) is linked at N5. A helical membrane pass occupies residues T26–I46. Topologically, residues V47–Q54 are cytoplasmic. The chain crosses the membrane as a helical span at residues L55–T75. The Extracellular portion of the chain corresponds to A76–L99. A helical membrane pass occupies residues Q100–F120. At D121–R139 the chain is on the cytoplasmic side. The chain crosses the membrane as a helical span at residues V140–M160. At T161–E196 the chain is on the extracellular side. A helical membrane pass occupies residues L197 to S217. Residues Y218–A237 lie on the Cytoplasmic side of the membrane. Residues L238–M258 traverse the membrane as a helical segment. The Extracellular segment spans residues Y259 to D271. Residues K272–L292 traverse the membrane as a helical segment. Over R293 to F310 the chain is Cytoplasmic.

Belongs to the G-protein coupled receptor 1 family.

Its subcellular location is the cell membrane. In terms of biological role, odorant receptor. This Homo sapiens (Human) protein is Olfactory receptor 5W2 (OR5W2).